The sequence spans 425 residues: Serine--tRNA ligase (425 aa).

233–235 contributes to the L-serine binding site; sequence TAE. An ATP-binding site is contributed by 264-266; the sequence is RRE. Glu287 is a binding site for L-serine. 351–354 is a binding site for ATP; it reads EISS. Ser387 contacts L-serine.

The protein belongs to the class-II aminoacyl-tRNA synthetase family. Type-1 seryl-tRNA synthetase subfamily. As to quaternary structure, homodimer. The tRNA molecule binds across the dimer.

Its subcellular location is the cytoplasm. The enzyme catalyses tRNA(Ser) + L-serine + ATP = L-seryl-tRNA(Ser) + AMP + diphosphate + H(+). It carries out the reaction tRNA(Sec) + L-serine + ATP = L-seryl-tRNA(Sec) + AMP + diphosphate + H(+). It participates in aminoacyl-tRNA biosynthesis; selenocysteinyl-tRNA(Sec) biosynthesis; L-seryl-tRNA(Sec) from L-serine and tRNA(Sec): step 1/1. Catalyzes the attachment of serine to tRNA(Ser). Is also able to aminoacylate tRNA(Sec) with serine, to form the misacylated tRNA L-seryl-tRNA(Sec), which will be further converted into selenocysteinyl-tRNA(Sec). The sequence is that of Serine--tRNA ligase from Thermotoga sp. (strain RQ2).